The following is an 892-amino-acid chain: Alanine--tRNA ligase (892 aa).

Residues histidine 565, histidine 569, cysteine 675, and histidine 679 each contribute to the Zn(2+) site. The segment at 852 to 871 (MGGKGGGGRPDMAQAGGPEA) is disordered.

This sequence belongs to the class-II aminoacyl-tRNA synthetase family. Zn(2+) serves as cofactor.

The protein localises to the cytoplasm. It catalyses the reaction tRNA(Ala) + L-alanine + ATP = L-alanyl-tRNA(Ala) + AMP + diphosphate. In terms of biological role, catalyzes the attachment of alanine to tRNA(Ala) in a two-step reaction: alanine is first activated by ATP to form Ala-AMP and then transferred to the acceptor end of tRNA(Ala). Also edits incorrectly charged Ser-tRNA(Ala) and Gly-tRNA(Ala) via its editing domain. The protein is Alanine--tRNA ligase of Parvibaculum lavamentivorans (strain DS-1 / DSM 13023 / NCIMB 13966).